We begin with the raw amino-acid sequence, 130 residues long: Histone H2A type 1 (130 aa).

The segment at 1–22 is disordered; that stretch reads MSGRGKQGGKARAKAKTRSSRA. Serine 2 carries the N-acetylserine modification. A Phosphoserine; by RPS6KA5 modification is found at serine 2. Citrulline; alternate is present on arginine 4. Arginine 4 is subject to Symmetric dimethylarginine; by PRMT5; alternate. Lysine 6 is modified (N6-(2-hydroxyisobutyryl)lysine). Residues 7–19 show a composition bias toward basic residues; it reads QGGKARAKAKTRS. Lysine 10 bears the N6-(2-hydroxyisobutyryl)lysine; alternate mark. Residue lysine 10 is modified to N6-lactoyllysine; alternate. Lysine 10 is subject to N6-succinyllysine; alternate. Glycyl lysine isopeptide (Lys-Gly) (interchain with G-Cter in ubiquitin) cross-links involve residues lysine 14 and lysine 16. Lysine 37 carries the post-translational modification N6-(2-hydroxyisobutyryl)lysine; alternate. At lysine 37 the chain carries N6-(beta-hydroxybutyryl)lysine; alternate. Residue lysine 37 is modified to N6-crotonyllysine; alternate. N6-(2-hydroxyisobutyryl)lysine is present on residues lysine 75 and lysine 76. Lysine 96 carries the N6-(2-hydroxyisobutyryl)lysine; alternate modification. Residue lysine 96 is modified to N6-succinyllysine; alternate. Position 96 is an N6-glutaryllysine; alternate (lysine 96). The residue at position 100 (lysine 100) is an N6-glutaryllysine. Position 105 is an N5-methylglutamine (glutamine 105). At lysine 119 the chain carries N6-(2-hydroxyisobutyryl)lysine; alternate. N6-crotonyllysine; alternate is present on residues lysine 119 and lysine 120. N6-glutaryllysine; alternate occurs at positions 119 and 120. A Glycyl lysine isopeptide (Lys-Gly) (interchain with G-Cter in ubiquitin); alternate cross-link involves residue lysine 120. Threonine 121 is modified (phosphothreonine; by DCAF1). Lysine 126 carries the post-translational modification N6-crotonyllysine; alternate. Lysine 126 carries the N6-glutaryllysine; alternate modification.

This sequence belongs to the histone H2A family. The nucleosome is a histone octamer containing two molecules each of H2A, H2B, H3 and H4 assembled in one H3-H4 heterotetramer and two H2A-H2B heterodimers. The octamer wraps approximately 147 bp of DNA. Interacts with VRK1; the interaction is mediated by the nucleosome acidic patch, a cluster of negatively charged residues of H2A and H2B forming a cleft within the nucleosome core. In terms of processing, deiminated on Arg-4 in granulocytes upon calcium entry. Monoubiquitination of Lys-120 (H2AK119Ub) by RING1, TRIM37 and RNF2/RING2 complex gives a specific tag for epigenetic transcriptional repression and participates in X chromosome inactivation of female mammals. It is involved in the initiation of both imprinted and random X inactivation. Ubiquitinated H2A is enriched in inactive X chromosome chromatin. Ubiquitination of H2A functions downstream of methylation of 'Lys-27' of histone H3 (H3K27me). H2AK119Ub by RNF2/RING2 can also be induced by ultraviolet and may be involved in DNA repair. Following DNA double-strand breaks (DSBs), it is ubiquitinated through 'Lys-63' linkage of ubiquitin moieties by the E2 ligase UBE2N and the E3 ligases RNF8 and RNF168, leading to the recruitment of repair proteins to sites of DNA damage. Ubiquitination at Lys-14 and Lys-16 (H2AK13Ub and H2AK15Ub, respectively) in response to DNA damage is initiated by RNF168 that mediates monoubiquitination at these 2 sites, and 'Lys-63'-linked ubiquitin are then conjugated to monoubiquitin; RNF8 is able to extend 'Lys-63'-linked ubiquitin chains in vitro. H2AK119Ub and ionizing radiation-induced 'Lys-63'-linked ubiquitination (H2AK13Ub and H2AK15Ub) are distinct events. Post-translationally, phosphorylation on Ser-2 (H2AS1ph) is enhanced during mitosis. Phosphorylation on Ser-2 by RPS6KA5/MSK1 directly represses transcription. Acetylation of H3 inhibits Ser-2 phosphorylation by RPS6KA5/MSK1. Phosphorylation at Thr-121 (H2AT120ph) by DCAF1 is present in the regulatory region of many tumor suppresor genes and down-regulates their transcription. In terms of processing, symmetric dimethylation on Arg-4 by the PRDM1/PRMT5 complex may play a crucial role in the germ-cell lineage. Glutamine methylation at Gln-105 (H2AQ104me) by FBL is specifically dedicated to polymerase I. It is present at 35S ribosomal DNA locus and impairs binding of the FACT complex. Post-translationally, crotonylation (Kcr) is specifically present in male germ cells and marks testis-specific genes in post-meiotic cells, including X-linked genes that escape sex chromosome inactivation in haploid cells. Crotonylation marks active promoters and enhancers and confers resistance to transcriptional repressors. It is also associated with post-meiotically activated genes on autosomes. In terms of processing, lactylated in macrophages by EP300/P300 by using lactoyl-CoA directly derived from endogenous or exogenous lactate, leading to stimulates gene transcription.

The protein localises to the nucleus. The protein resides in the chromosome. Core component of nucleosome. Nucleosomes wrap and compact DNA into chromatin, limiting DNA accessibility to the cellular machineries which require DNA as a template. Histones thereby play a central role in transcription regulation, DNA repair, DNA replication and chromosomal stability. DNA accessibility is regulated via a complex set of post-translational modifications of histones, also called histone code, and nucleosome remodeling. The polypeptide is Histone H2A type 1 (Bos taurus (Bovine)).